A 141-amino-acid chain; its full sequence is MAKKVVAIIKLAIAAGKANPAPPIGPALGQHGVNIMMFCKEYNAKTSDQAGLVVPVEISVYEDRSFTFILKTPPASVLIKKAAGIEKGSGEPNAVQVGQITKAQLQEIAQTKMPDLNANDIEAAMNIVAGTARNMGVAVVD.

This sequence belongs to the universal ribosomal protein uL11 family. As to quaternary structure, part of the ribosomal stalk of the 50S ribosomal subunit. Interacts with L10 and the large rRNA to form the base of the stalk. L10 forms an elongated spine to which L12 dimers bind in a sequential fashion forming a multimeric L10(L12)X complex. In terms of processing, one or more lysine residues are methylated.

Its function is as follows. Forms part of the ribosomal stalk which helps the ribosome interact with GTP-bound translation factors. This Acaryochloris marina (strain MBIC 11017) protein is Large ribosomal subunit protein uL11.